Reading from the N-terminus, the 189-residue chain is Probable chorismate pyruvate-lyase (189 aa).

Substrate is bound by residues Arg-77, Leu-115, and Glu-174.

It belongs to the UbiC family.

It is found in the cytoplasm. The catalysed reaction is chorismate = 4-hydroxybenzoate + pyruvate. It functions in the pathway cofactor biosynthesis; ubiquinone biosynthesis. Its function is as follows. Removes the pyruvyl group from chorismate, with concomitant aromatization of the ring, to provide 4-hydroxybenzoate (4HB) for the ubiquinone pathway. This Shewanella sp. (strain MR-7) protein is Probable chorismate pyruvate-lyase.